Consider the following 325-residue polypeptide: Glycerol-3-phosphate dehydrogenase [NAD(P)+] (325 aa).

Residues Ser-14, Phe-15, Arg-35, and Lys-109 each contribute to the NADPH site. Residues Lys-109 and Gly-137 each coordinate sn-glycerol 3-phosphate. Ala-141 contributes to the NADPH binding site. The sn-glycerol 3-phosphate site is built by Lys-192, Asp-247, Ser-257, Arg-258, and Asn-259. Catalysis depends on Lys-192, which acts as the Proton acceptor. Arg-258 serves as a coordination point for NADPH. NADPH contacts are provided by Leu-282 and Glu-284.

The protein belongs to the NAD-dependent glycerol-3-phosphate dehydrogenase family.

The protein localises to the cytoplasm. It carries out the reaction sn-glycerol 3-phosphate + NAD(+) = dihydroxyacetone phosphate + NADH + H(+). It catalyses the reaction sn-glycerol 3-phosphate + NADP(+) = dihydroxyacetone phosphate + NADPH + H(+). It functions in the pathway membrane lipid metabolism; glycerophospholipid metabolism. Functionally, catalyzes the reduction of the glycolytic intermediate dihydroxyacetone phosphate (DHAP) to sn-glycerol 3-phosphate (G3P), the key precursor for phospholipid synthesis. The protein is Glycerol-3-phosphate dehydrogenase [NAD(P)+] of Rickettsia conorii (strain ATCC VR-613 / Malish 7).